Reading from the N-terminus, the 551-residue chain is Adenine deaminase (551 aa).

It belongs to the metallo-dependent hydrolases superfamily. Adenine deaminase family. The cofactor is Mn(2+).

The enzyme catalyses adenine + H2O + H(+) = hypoxanthine + NH4(+). The protein is Adenine deaminase of Leuconostoc mesenteroides subsp. mesenteroides (strain ATCC 8293 / DSM 20343 / BCRC 11652 / CCM 1803 / JCM 6124 / NCDO 523 / NBRC 100496 / NCIMB 8023 / NCTC 12954 / NRRL B-1118 / 37Y).